A 327-amino-acid chain; its full sequence is Phenylalanine--tRNA ligase alpha subunit (327 aa).

Glu-252 lines the Mg(2+) pocket.

The protein belongs to the class-II aminoacyl-tRNA synthetase family. Phe-tRNA synthetase alpha subunit type 1 subfamily. In terms of assembly, tetramer of two alpha and two beta subunits. It depends on Mg(2+) as a cofactor.

It localises to the cytoplasm. The enzyme catalyses tRNA(Phe) + L-phenylalanine + ATP = L-phenylalanyl-tRNA(Phe) + AMP + diphosphate + H(+). The chain is Phenylalanine--tRNA ligase alpha subunit from Yersinia pestis bv. Antiqua (strain Antiqua).